The sequence spans 435 residues: Nuclear receptor subfamily 6 group A member 1 (435 aa).

The segment at residues 11-86 (QRACLICGDR…MGMNRKAIRE (76 aa)) is a DNA-binding region (nuclear receptor). 2 NR C4-type zinc fingers span residues 14 to 34 (CLICGDRATGLHYGIISCEGC) and 50 to 69 (CSRDKNCVMSRKQRNRCQYC). Residues 84–158 (IREDGMPGGR…STPSSSRSME (75 aa)) form a disordered region. Residues 121–141 (NTSWSNNGDSDHSSPGNAVSE) show a composition bias toward polar residues. A compositionally biased stretch (low complexity) spans 142–156 (SNQPSPVSTPSSSRS). The NR LBD domain maps to 204-435 (QSHTLINQLL…HSCKTIVTKE (232 aa)).

This sequence belongs to the nuclear hormone receptor family. NR6 subfamily. In terms of assembly, homodimer. Transiently expressed in differentiating cells of all embryonic germ layers. Expressed in an anterior to posterior concentration gradient from late gastrula to midneurula stages. Shows a complicated spatio-temporal pattern of expression during neurulation, being predominant in the neural plate and neural crest in midneurula embryos. At late tailbud (stage 30), mainly expressed in the head mesenchyme, gill arches and tail tip. Expression persists in the epidermis, somites and endoderm, and in the central nervous system, expression is restricted to the midbrain, hindbrain and part of the spinal cord. Isoforms Oo and Em are both expressed in the brain and isoform Oo is expressed in the germ cells of both the adult testis and ovary.

Its subcellular location is the cytoplasm. It localises to the nucleus. Its function is as follows. Probable orphan nuclear receptor. Binds to a response element containing repeats of the motif 5'-AGGTCA-3'. Required for anterior-posterior patterning during organogenesis. Acts with chordin to play a role in patterning the midbrain-hindbrain. Isoform Em is required for integrin-mediated cell matrix interaction during neurulation and for the morphogenetic movements leading to formation of the neural tube. Also mediates the effect of retinoic acid on primary neurogenesis. This is Nuclear receptor subfamily 6 group A member 1 from Xenopus laevis (African clawed frog).